Reading from the N-terminus, the 219-residue chain is 7-cyano-7-deazaguanine synthase (219 aa).

ATP is bound at residue 10-20; the sequence is FSGGQDSTTCL. Positions 186, 195, 198, and 201 each coordinate Zn(2+).

The protein belongs to the QueC family. Homodimer. Zn(2+) serves as cofactor.

It catalyses the reaction 7-carboxy-7-deazaguanine + NH4(+) + ATP = 7-cyano-7-deazaguanine + ADP + phosphate + H2O + H(+). It functions in the pathway purine metabolism; 7-cyano-7-deazaguanine biosynthesis. Its function is as follows. Catalyzes the ATP-dependent conversion of 7-carboxy-7-deazaguanine (CDG) to 7-cyano-7-deazaguanine (preQ(0)). This Bacillus velezensis (strain DSM 23117 / BGSC 10A6 / LMG 26770 / FZB42) (Bacillus amyloliquefaciens subsp. plantarum) protein is 7-cyano-7-deazaguanine synthase.